Consider the following 570-residue polypeptide: Sulfite reductase [NADPH] hemoprotein beta-component (570 aa).

The [4Fe-4S] cluster site is built by Cys-434, Cys-440, Cys-479, and Cys-483. Cys-483 serves as a coordination point for siroheme.

Belongs to the nitrite and sulfite reductase 4Fe-4S domain family. Alpha(8)-beta(8). The alpha component is a flavoprotein, the beta component is a hemoprotein. Siroheme serves as cofactor. It depends on [4Fe-4S] cluster as a cofactor.

It carries out the reaction hydrogen sulfide + 3 NADP(+) + 3 H2O = sulfite + 3 NADPH + 4 H(+). It functions in the pathway sulfur metabolism; hydrogen sulfide biosynthesis; hydrogen sulfide from sulfite (NADPH route): step 1/1. Functionally, component of the sulfite reductase complex that catalyzes the 6-electron reduction of sulfite to sulfide. This is one of several activities required for the biosynthesis of L-cysteine from sulfate. The chain is Sulfite reductase [NADPH] hemoprotein beta-component from Escherichia coli O17:K52:H18 (strain UMN026 / ExPEC).